A 231-amino-acid chain; its full sequence is Ribonuclease 3 (231 aa).

The region spanning 8–135 (VGDLERRIGH…LMAALYQDGG (128 aa)) is the RNase III domain. Glutamate 48 contributes to the Mg(2+) binding site. Catalysis depends on residues aspartate 52 and glutamate 124. Glutamate 124 provides a ligand contact to Mg(2+). The 70-residue stretch at 161–230 (DPKTALQEWA…AKALLEREGA (70 aa)) folds into the DRBM domain. A disordered region spans residues 210–231 (GKSRQEAEKAAAKALLEREGAG). Over residues 212-231 (SRQEAEKAAAKALLEREGAG) the composition is skewed to basic and acidic residues.

Belongs to the ribonuclease III family. In terms of assembly, homodimer. Requires Mg(2+) as cofactor.

Its subcellular location is the cytoplasm. The catalysed reaction is Endonucleolytic cleavage to 5'-phosphomonoester.. In terms of biological role, digests double-stranded RNA. Involved in the processing of primary rRNA transcript to yield the immediate precursors to the large and small rRNAs (23S and 16S). Processes some mRNAs, and tRNAs when they are encoded in the rRNA operon. Processes pre-crRNA and tracrRNA of type II CRISPR loci if present in the organism. This Caulobacter vibrioides (strain ATCC 19089 / CIP 103742 / CB 15) (Caulobacter crescentus) protein is Ribonuclease 3.